The primary structure comprises 230 residues: 7-cyano-7-deazaguanine synthase (230 aa).

9 to 19 provides a ligand contact to ATP; it reads ISGGLDSTTCL. 4 residues coordinate Zn(2+): C192, C202, C205, and C208.

It belongs to the QueC family. Zn(2+) is required as a cofactor.

It catalyses the reaction 7-carboxy-7-deazaguanine + NH4(+) + ATP = 7-cyano-7-deazaguanine + ADP + phosphate + H2O + H(+). The protein operates within purine metabolism; 7-cyano-7-deazaguanine biosynthesis. Catalyzes the ATP-dependent conversion of 7-carboxy-7-deazaguanine (CDG) to 7-cyano-7-deazaguanine (preQ(0)). The chain is 7-cyano-7-deazaguanine synthase from Myxococcus xanthus (strain DK1622).